The chain runs to 511 residues: RNA polymerase principal sigma factor HrdB (511 aa).

The disordered stretch occupies residues 72–186 (SAAEPKRTRK…AATEEPEGTE (115 aa)). Residues 78–93 (RTRKSVAAKSPAKRTA) show a composition bias toward basic residues. The segment covering 94-121 (TKAVAAKPVTSRKATAPAAPAAPATEPA) has biased composition (low complexity). Positions 132-158 (AAAKKTTAKKATAKKTTAKKAAAKKTT) are enriched in basic residues. Residues 211-347 (TADPVKDYLK…ITRAMADQAR (137 aa)) form a binds RNA polymerase-binding protein RbpA region. The segment at 278–348 (LLEANLRLVV…TRAMADQART (71 aa)) is sigma-70 factor domain-2. An Interaction with polymerase core subunit RpoC motif is present at residues 302–305 (DLIQ). The interval 357-433 (EVINKLARVQ…DSEAVVPADA (77 aa)) is sigma-70 factor domain-3. A sigma-70 factor domain-4 region spans residues 446 to 499 (VLDTLSEREAGVVSMRFGLTDGQPKTLDEIGKVYGVTRERIRQIESKTMSKLRH). The H-T-H motif DNA-binding region spans 472 to 491 (LDEIGKVYGVTRERIRQIES).

Belongs to the sigma-70 factor family. Homotrimer (Potential). interacts transiently with the RNA polymerase core complex. Interacts with RNA polymerase-binding protein RbpA via its sigma-2 region (residues 211-347) in a free form.

Its function is as follows. Sigma factors are initiation factors that promote the attachment of RNA polymerase to specific initiation sites and are then released. This sigma factor is the primary sigma factor during exponential growth. Its activity is stimulated by RbpA. The protein is RNA polymerase principal sigma factor HrdB (hrdB) of Streptomyces coelicolor (strain ATCC BAA-471 / A3(2) / M145).